The chain runs to 179 residues: MTRQRIAIDMDEVLADTLGAVVKAVNERADLNIKMESLNGKKLKHMIPEHEGLVMDILKEPGFFRNLDVMPHAQEVVKQLNEHYDIYIATAAMDVPTSFHDKYEWLLEYFPFLDPQHFVFCGRKNIILADYLIDDNPKQLEIFEGKSIMFTASHNVNEHRFERVSGWRDVKNYFNSIEK.

D9 acts as the Nucleophile in catalysis. Residues D9, D11, and D135 each contribute to the Mg(2+) site. D11 (proton donor) is an active-site residue.

It belongs to the 5'(3')-deoxyribonucleotidase family. It depends on Mg(2+) as a cofactor.

Functionally, dephosphorylates the 5' and 2'(3')-phosphates of deoxyribonucleotides. The protein is Putative 5'(3')-deoxyribonucleotidase of Staphylococcus epidermidis (strain ATCC 35984 / DSM 28319 / BCRC 17069 / CCUG 31568 / BM 3577 / RP62A).